An 872-amino-acid polypeptide reads, in one-letter code: Valine--tRNA ligase (872 aa).

The 'HIGH' region signature appears at 46–56; sequence PNVTGKLHIGH. The short motif at 523–527 is the 'KMSKS' region element; sequence KMSKS. Lys526 is an ATP binding site. Residues 796 to 872 are a coiled coil; it reads IEIANDSFIN…KDKLKELTND (77 aa).

This sequence belongs to the class-I aminoacyl-tRNA synthetase family. ValS type 1 subfamily. As to quaternary structure, monomer.

Its subcellular location is the cytoplasm. It catalyses the reaction tRNA(Val) + L-valine + ATP = L-valyl-tRNA(Val) + AMP + diphosphate. Its function is as follows. Catalyzes the attachment of valine to tRNA(Val). As ValRS can inadvertently accommodate and process structurally similar amino acids such as threonine, to avoid such errors, it has a 'posttransfer' editing activity that hydrolyzes mischarged Thr-tRNA(Val) in a tRNA-dependent manner. This Mycoplasma mycoides subsp. mycoides SC (strain CCUG 32753 / NCTC 10114 / PG1) protein is Valine--tRNA ligase.